A 76-amino-acid chain; its full sequence is Dermaseptin-SP2 (76 aa).

The N-terminal stretch at 1–22 (MAFLKKSLFLVLFLGLVSLSIC) is a signal peptide. A propeptide spanning residues 23 to 45 (EEEKRENEDEEEQEDEEQSEEKR) is cleaved from the precursor. The segment at 24-44 (EEKRENEDEEEQEDEEQSEEK) is disordered. A compositionally biased stretch (acidic residues) spans 30–41 (EDEEEQEDEEQS). Glutamine 73 carries the glutamine amide modification. A propeptide spanning residues 74–76 (GEQ) is cleaved from the precursor.

In terms of tissue distribution, expressed by the skin glands.

It localises to the secreted. It is found in the target cell membrane. Antimicrobial peptide with activity against Gram-positive and Gram-negative bacteria and fungi. Has been tested against E.coli (MIC=2.68-8 uM), S.aureus (ATCC 25923, MIC=2.68-8 uM), S.aureus (ATCC oxacillin resistant, MIC=2.68 uM), K.pneumoniae (MIC=10.71 uM) and C.albicans (MIC=10.71-32 uM). Probably acts by disturbing membrane functions with its alpha-helical amphipathic structure. May penetrate bacterial membranes, but stay at the mammalian membrane surface. Shows a very weak hemolytic activity. In Agalychnis spurrelli (Gliding leaf frog), this protein is Dermaseptin-SP2.